Here is a 2042-residue protein sequence, read N- to C-terminus: Protein mini spindles (2042 aa).

2 TOG regions span residues 1-229 and 267-505; these read MAED…VEPS and MDLL…KVAG. A binds tubulin region spans residues 1-505; it reads MAEDTEYKKL…KAEIKIKVAG (505 aa). 2 promotes microtubule polymerization regions span residues 1 to 516 and 581 to 1080; these read MAED…ASAP and TPEE…EKAR. HEAT repeat units lie at residues 120–157, 160–197, 270–311, 315–353, 357–394, 396–433, and 440–478; these read EKQE…EFGH, IGVK…WIGA, LDPV…DHPK, GEYG…GLAK, NYAS…STSL, AQQE…TALN, and LTTS…VTPL. Residues 498–821 form an association with microtubule lattice region; the sequence is EIKIKVAGPK…PKPVRGVQRS (324 aa). The tract at residues 506–572 is disordered; the sequence is PKKETRPASA…PTAALKAGGK (67 aa). Low complexity predominate over residues 513–531; that stretch reads ASAPTAKAAAPAKTVAGSV. Positions 581 to 814 are TOG 3; it reads TPEELQEKSE…KNVGEKPPKP (234 aa). HEAT repeat units lie at residues 587-624, 625-662, 672-710, and 745-782; these read EKSE…SGFD, AKQA…IIRS, TTVD…LEYV, and LQPK…YMGK. A disordered region spans residues 804–849; that stretch reads DKNVGEKPPKPVRGVQRSSGGTAGNSPDNEDDDGGAAGEEEPINMA. Polar residues predominate over residues 819–830; that stretch reads QRSSGGTAGNSP. A compositionally biased stretch (acidic residues) spans 831-845; sequence DNEDDDGGAAGEEEP. 2 TOG regions span residues 849-1087 and 1179-1415; these read ADLL…PVKP and TELL…KPTP. 4 HEAT repeats span residues 856–893, 896–933, 937–974, and 1017–1054; these read DIAP…EARL, PSIG…AMGA, NHVR…KGGY, and EDIH…HLGF. Residues 1083–1140 are disordered; the sequence is LPVKPLPKGKHQAPIPEEPKLKTVRGGGAGGAPGIQKSATARVAGGQDKQVPARKKDE. The segment at 1099–1428 is association with microtubule lattice; that stretch reads EEPKLKTVRG…VDVPAPQRHD (330 aa). 4 HEAT repeats span residues 1205–1242, 1272–1309, 1311–1344, and 1346–1383; these read RYHL…RFYD, NEGS…VFPF, KVFG…SYGM, and ICPQ…LSGE. Disordered stretches follow at residues 1407–1455 and 1940–1959; these read AKKT…TFDQ and NAGS…NGPD. Polar residues predominate over residues 1940–1957; the sequence is NAGSTQDNRTDVNYQNNG.

It belongs to the TOG/XMAP215 family. Interacts with tacc, dgt6. Interacts with mv. Interacts with Patronin.

It is found in the cytoplasm. The protein resides in the cytoskeleton. Its subcellular location is the microtubule organizing center. The protein localises to the centrosome. It localises to the spindle. It is found in the perinuclear region. Its function is as follows. Binds to the plus end of microtubules and regulates microtubule dynamics and microtubule organization. Function in neurons is essential for adult survival, and is important for climbing behavior and activity. Promotes cytoplasmic microtubule nucleation and elongation. May act as a microtubule antipause factor that rapidly catalyzes the transition from pause to either growth or shrinkage. Involved in mitotic spindle elongation. Involved in the establishment of cell polarity and mitotic spindle orientation in neuroblasts. Required for maintaining the bipolarity of acentrosomal meiotic spindles; the function is dependent on tacc and involves ncd. Involved in oocyte microtubule cytoskeleton organization and bicoid mRNA localization. Seems to be involved in elongation of kinetochore-derived microtubule fibers. In fat body cells, essential component of perinuclear non-centrosomal microtubule-organizing centers (ncMTOCs) which function to accommodate the organization of microtubule (MT) networks to control nuclear positioning and dynein motor-based retrograde endosomal trafficking. Within the ncMTOCs, Msp300 and shot anchors the ncMTOC at the nuclear surface and recruits the MT minus-end regulators Patronin and Nin for assembly, anchoring and/or stabilization of circumferential and radial MTs at the ncMTOCs. Patronin, and perhaps Nin, then recruits msps to the ncMTOC where it is required for the gamma-tubulin-independent elongation and assembly of radial MTs. The polypeptide is Protein mini spindles (msps) (Drosophila melanogaster (Fruit fly)).